The primary structure comprises 60 residues: Large ribosomal subunit protein bL32 (60 aa).

A disordered region spans residues methionine 1 to threonine 23. The span at histidine 7 to tyrosine 20 shows a compositional bias: basic residues.

The protein belongs to the bacterial ribosomal protein bL32 family.

In Streptococcus equi subsp. equi (strain 4047), this protein is Large ribosomal subunit protein bL32.